The sequence spans 766 residues: Dipeptidyl peptidase 4 (766 aa).

Residues 1–6 are Cytoplasmic-facing; that stretch reads MKTPWK. Residues 7-27 traverse the membrane as a helical; Signal-anchor for type II membrane protein segment; it reads VLLGLLGIAALVTVITVPVVL. The Extracellular segment spans residues 28–766; that stretch reads LNKGTDDAAA…HFLKQCFSLP (739 aa). N-linked (GlcNAc...) asparagine glycans are attached at residues N85, N92, N150, N179, N219, N229, N279, and N321. Disulfide bonds link C385-C394, C444-C447, and C454-C472. S630 serves as the catalytic Charge relay system. C649 and C762 are joined by a disulfide. N-linked (GlcNAc...) asparagine glycosylation is present at N685. Active-site charge relay system residues include D708 and H740.

Belongs to the peptidase S9B family. DPPIV subfamily. As to quaternary structure, monomer. Homodimer. Heterodimer with Seprase (FAP). Requires homodimerization for optimal dipeptidyl peptidase activity and T-cell costimulation. Found in a membrane raft complex, at least composed of BCL10, CARD11, DPP4 and IKBKB. Associates with collagen. Interacts with PTPRC; the interaction is enhanced in an interleukin-12-dependent manner in activated lymphocytes. Interacts (via extracellular domain) with ADA; does not inhibit its dipeptidyl peptidase activity. Interacts with CAV1 (via the N-terminus); the interaction is direct. Interacts (via cytoplasmic tail) with CARD11 (via PDZ domain); its homodimerization is necessary for interaction with CARD11. Interacts with IGF2R; the interaction is direct. Interacts with GPC3. In terms of processing, the soluble form (Dipeptidyl peptidase 4 soluble form also named SDPP) derives from the membrane form (Dipeptidyl peptidase 4 membrane form also named MDPP) by proteolytic processing. Post-translationally, N- and O-Glycosylated. Phosphorylated. Mannose 6-phosphate residues in the carbohydrate moiety are necessary for interaction with IGF2R in activated T-cells. Mannose 6-phosphorylation is induced during T-cell activation.

The protein resides in the secreted. It is found in the cell membrane. Its subcellular location is the apical cell membrane. It localises to the cell projection. The protein localises to the invadopodium membrane. The protein resides in the lamellipodium membrane. It is found in the cell junction. Its subcellular location is the membrane raft. The enzyme catalyses Release of an N-terminal dipeptide, Xaa-Yaa-|-Zaa-, from a polypeptide, preferentially when Yaa is Pro, provided Zaa is neither Pro nor hydroxyproline.. Its activity is regulated as follows. Inhibited by GPC3 and diprotin A. Cell surface glycoprotein receptor involved in the costimulatory signal essential for T-cell receptor (TCR)-mediated T-cell activation. Acts as a positive regulator of T-cell coactivation, by binding at least ADA, CAV1, IGF2R, and PTPRC. Its binding to CAV1 and CARD11 induces T-cell proliferation and NF-kappa-B activation in a T-cell receptor/CD3-dependent manner. Its interaction with ADA also regulates lymphocyte-epithelial cell adhesion. In association with FAP is involved in the pericellular proteolysis of the extracellular matrix (ECM), the migration and invasion of endothelial cells into the ECM. May be involved in the promotion of lymphatic endothelial cells adhesion, migration and tube formation. When overexpressed, enhanced cell proliferation, a process inhibited by GPC3. Also acts as a serine exopeptidase with a dipeptidyl peptidase activity that regulates various physiological processes by cleaving peptides in the circulation, including many chemokines, mitogenic growth factors, neuropeptides and peptide hormones such as brain natriuretic peptide 32. Removes N-terminal dipeptides sequentially from polypeptides having unsubstituted N-termini provided that the penultimate residue is proline. In Sus scrofa (Pig), this protein is Dipeptidyl peptidase 4 (DPP4).